Consider the following 225-residue polypeptide: Lipid A 4'-phosphatase (225 aa).

The next 6 helical transmembrane spans lie at 29–49 (SAFT…YILL), 51–71 (NFHW…ITFA), 110–130 (FGFP…LICL), 136–156 (LSIF…YLGL), 160–180 (GDLV…YFIA), and 203–223 (TEVM…YSIV).

It belongs to the lipid A LpxF 4'-phosphatase family.

It localises to the cell inner membrane. Its pathway is bacterial outer membrane biogenesis; LPS lipid A biosynthesis. In terms of biological role, probably removes the 4'-phosphate group from lipid A. Removal of this phosphate group confers resistance to cationic antimicrobial peptides (CAMPs), inflammation-associated peptides produced by the human host. This LPS modification helps maintain the stability of this commensal bacterium in gut microbiota. This is Lipid A 4'-phosphatase from Bacteroides thetaiotaomicron (strain ATCC 29148 / DSM 2079 / JCM 5827 / CCUG 10774 / NCTC 10582 / VPI-5482 / E50).